The primary structure comprises 293 residues: uncharacterized protein (293 aa).

A coiled-coil region spans residues 65-89 (LQKYLENIKNKKLNLNKQSNNQTNN). Residues 81-112 (KQSNNQTNNQTNNQTNNQTNNQTNNIRPQINN) are disordered.

The protein resides in the virion. This is an uncharacterized protein from Acanthamoeba polyphaga mimivirus (APMV).